The following is a 591-amino-acid chain: MLRSHAAGSLRSSDAGQQVTLAGWVARRRDHGGVIFIDLRDASGITQVVFRDPDVLKQAHRLRAEFCVAVTGLVEIRPEGNANPEIATGDIEVNASSLTVLGESAPLPFQLDEPAGEELRLKYRYLDLRRDAPASAIRLRSKVNAAAREVLDRHDFVEIETPTITRSTPEGARDFLVPARLHPGSFYALPQSPQLFKQLLMVAGMERYYQIARCYRDEDFRADRQPEFTQLDMEMSFVDAEDVIAISEEILAALWALIGYDIPRPIPRISYADAMARYGSDKPDLRFGLELVECSEFFKDTTFRVFQAPYVGAVVMPGGASQPRRTLDGWQEWAKQRGAKGLAYVLVGEDGELGGPVAKNLSEAERAGLAGHVGAAPGDCIFFAAGPAKPSRALLGAARSEIAHRLGLIDPQAWAFVWVVDPPLFEPADDATAAGDVAVGSGAWTAVHHAFTAPKPGYEDAIETDTGNVLADAYDIVCNGNEIGGGSIRIHRRDIQERVFAVMGLDHAEAQEKFGFLLEAFTFGAPPHGGIAFGWDRINALLSRVDSIREVIAFPKTGGGVDPLTDAPAPITEQQRKESGIDVKPEPSKPH.

Glu-170 contributes to the L-aspartate binding site. Residues 194–197 (QLFK) form an aspartate region. Arg-216 contacts L-aspartate. ATP contacts are provided by residues 216-218 (RDE) and Gln-225. L-aspartate is bound at residue His-448. ATP is bound at residue Glu-482. Arg-489 serves as a coordination point for L-aspartate. 534–537 (GWDR) serves as a coordination point for ATP. The tract at residues 559–591 (GGVDPLTDAPAPITEQQRKESGIDVKPEPSKPH) is disordered. Residues 574-591 (QQRKESGIDVKPEPSKPH) show a composition bias toward basic and acidic residues.

Belongs to the class-II aminoacyl-tRNA synthetase family. Type 1 subfamily. Homodimer.

The protein localises to the cytoplasm. It carries out the reaction tRNA(Asx) + L-aspartate + ATP = L-aspartyl-tRNA(Asx) + AMP + diphosphate. Aspartyl-tRNA synthetase with relaxed tRNA specificity since it is able to aspartylate not only its cognate tRNA(Asp) but also tRNA(Asn). Reaction proceeds in two steps: L-aspartate is first activated by ATP to form Asp-AMP and then transferred to the acceptor end of tRNA(Asp/Asn). This is Aspartate--tRNA(Asp/Asn) ligase from Mycolicibacterium paratuberculosis (strain ATCC BAA-968 / K-10) (Mycobacterium paratuberculosis).